A 339-amino-acid polypeptide reads, in one-letter code: Type IV secretion system protein PtlH homolog (339 aa).

This sequence belongs to the GSP E family.

The sequence is that of Type IV secretion system protein PtlH homolog (ptlH) from Bordetella bronchiseptica (strain ATCC BAA-588 / NCTC 13252 / RB50) (Alcaligenes bronchisepticus).